The primary structure comprises 1085 residues: Solute carrier family 12 member 4 (1085 aa).

The Cytoplasmic segment spans residues 1-119; it reads MPHFTVVPVD…RRAAEAPSMG (119 aa). Phosphoserine is present on residues S24, S47, S51, S81, and S88. A discontinuously helical transmembrane segment spans residues 120 to 141; it reads TLMGVYLPCLQNIFGVILFLRL. K(+) is bound by residues N131 and I132. The Extracellular portion of the chain corresponds to 142–149; that stretch reads TWMVGTAG. Residues 150-172 form a helical membrane-spanning segment; the sequence is VLQALLIVLICCCCTLLTAISMS. Residues 173–196 are Cytoplasmic-facing; it reads AIATNGVVPAGGSYFMISRSLGPE. A helical transmembrane segment spans residues 197-225; that stretch reads FGGAVGLCFYLGTTFAAAMYILGAIEILL. Y216 is a K(+) binding site. At 226 to 248 the chain is on the extracellular side; it reads TYIAPPAAIFYPSGAHDTSNATL. An N-linked (GlcNAc...) asparagine glycan is attached at N245. 2 consecutive transmembrane segments (helical) span residues 249–271 and 272–297; these read NNMRVYGTIFLTFMTLVVFVGVK and YVNKFASLFLACVIISILSIYAGGIK. Topologically, residues 298–419 are extracellular; sequence SIFDPPVFPV…LYVVADIATS (122 aa). C308 and C323 are joined by a disulfide. N312, N331, N347, and N361 each carry an N-linked (GlcNAc...) asparagine glycan. An intrachain disulfide couples C343 to C353. The helical transmembrane segment at 420–440 threads the bilayer; the sequence is FTVLVGIFFPSVTGIMAGSNR. K(+)-binding residues include P429 and T432. Chloride-binding residues include G433, I434, and M435. Residues 441-450 lie on the Cytoplasmic side of the membrane; it reads SGDLRDAQKS. Residues 451–473 traverse the membrane as a helical segment; the sequence is IPVGTILAIITTSLVYFSSVVLF. At 474–504 the chain is on the extracellular side; that stretch reads GACIEGVVLRDKYGDGVSRNLVVGTLAWPSP. A helical transmembrane segment spans residues 505 to 531; the sequence is WVIVIGSFFSTCGAGLQSLTGAPRLLQ. The Cytoplasmic portion of the chain corresponds to 532–554; sequence AIAKDNIIPFLRVFGHGKVNGEP. Helical transmembrane passes span 555–575 and 576–598; these read TWALLLTALIAELGILIASLD and MVAPILSMFFLMCYLFVNLACAV. Y589 lines the chloride pocket. The Cytoplasmic portion of the chain corresponds to 599 to 612; that stretch reads QTLLRTPNWRPRFK. The next 2 membrane-spanning stretches (helical) occupy residues 613 to 635 and 636 to 651; these read YYHWALSFLGMSLCLALMFVSSW and YYALVAMLIAGMIYKY. The Cytoplasmic segment spans residues 652–1085; it reads IEYQGAEKEW…GGREVITIYS (434 aa). A scissor helix region spans residues 665 to 681; that stretch reads IRGLSLSAARYALLRLE. Residues L697, K699, K707, Y708, and V730 each contribute to the ATP site. S734 bears the Phosphoserine mark. ATP contacts are provided by G794, W795, and Y797. Phosphoserine occurs at positions 916 and 967. T983 bears the Phosphothreonine mark. Position 1050 is a phosphoserine (S1050).

The protein belongs to the SLC12A transporter family. K/Cl co-transporter subfamily. Homodimer; adopts a domain-swap conformation at the scissor helices connecting the transmembrane domain and C-terminal domain. Heterodimer with other K-Cl cotransporters. Phosphorylated, phosphorylation may regulate transporter activity. In terms of tissue distribution, ubiquitous. Levels are much higher in erythrocytes from patients with Hb SC and Hb SS compared to normal AA erythrocytes. This may contribute to red blood cell dehydration and to the manifestation of sickle cell disease by increasing the intracellular concentration of HbS. Not detected in circulating reticulocytes.

The protein localises to the cell membrane. It catalyses the reaction K(+)(in) + chloride(in) = K(+)(out) + chloride(out). Inhibited by WNK3. In terms of biological role, mediates electroneutral potassium-chloride cotransport when activated by cell swelling. May contribute to cell volume homeostasis in single cells. May be involved in the regulation of basolateral Cl(-) exit in NaCl absorbing epithelia. No transporter activity. This chain is Solute carrier family 12 member 4, found in Homo sapiens (Human).